The sequence spans 152 residues: Nucleoside diphosphate kinase (152 aa).

The ATP site is built by Lys10, Phe58, Arg86, Thr92, Arg103, and Asn113. His116 serves as the catalytic Pros-phosphohistidine intermediate.

The protein belongs to the NDK family. Mg(2+) is required as a cofactor.

It localises to the cytoplasm. It carries out the reaction a 2'-deoxyribonucleoside 5'-diphosphate + ATP = a 2'-deoxyribonucleoside 5'-triphosphate + ADP. It catalyses the reaction a ribonucleoside 5'-diphosphate + ATP = a ribonucleoside 5'-triphosphate + ADP. Functionally, major role in the synthesis of nucleoside triphosphates other than ATP. The ATP gamma phosphate is transferred to the NDP beta phosphate via a ping-pong mechanism, using a phosphorylated active-site intermediate. This is Nucleoside diphosphate kinase from Methanosphaera stadtmanae (strain ATCC 43021 / DSM 3091 / JCM 11832 / MCB-3).